Here is a 396-residue protein sequence, read N- to C-terminus: NAD(P)H oxidoreductase RTN4IP1, mitochondrial (396 aa).

Residues 1-40 constitute a mitochondrion transit peptide; the sequence is MGFLKTCVFRRNACTAVCFWRSQVVQKPSVRKISTTSPRS. In terms of domain architecture, Enoyl reductase (ER) spans 52 to 393; sequence GSNEVLRFTQ…RGHARGKTVI (342 aa). NADPH is bound by residues S214, G216, V217, S237, Y255, N276, L300, A341, F343, H386, A387, and R388.

Belongs to the zinc-containing alcohol dehydrogenase family. Quinone oxidoreductase subfamily. Interacts with RTN4, UQCRC1 and UQCRC2.

The protein localises to the mitochondrion matrix. It localises to the mitochondrion outer membrane. The enzyme catalyses a 3-demethylubiquinone + NADH + 2 H(+) = a 3-demethylubiquinol + NAD(+). It catalyses the reaction a 3-demethylubiquinone + NADPH + 2 H(+) = a 3-demethylubiquinol + NADP(+). The catalysed reaction is 3-demethylubiquinone-10 + NADH + 2 H(+) = 3-demethylubiquinol-10 + NAD(+). It carries out the reaction 3-demethylubiquinone-10 + NADPH + 2 H(+) = 3-demethylubiquinol-10 + NADP(+). It participates in cofactor biosynthesis; ubiquinone biosynthesis. Its function is as follows. NAD(P)H oxidoreductase involved in the ubiquinone biosynthetic pathway. Required for the O-methyltransferase activity of COQ3. Able to catalyze the oxidoreduction of 3-demethylubiquinone into 3-demethylubiquinol in vitro. However, it is unclear if 3-demethylubiquinone constitutes a substrate in vivo. May also play a role in the regulation of retinal ganglion cell (RGC) neurite outgrowth, and hence in the development of the inner retina and optic nerve. Appears to be a potent inhibitor of regeneration following spinal cord injury. This is NAD(P)H oxidoreductase RTN4IP1, mitochondrial (RTN4IP1) from Bos taurus (Bovine).